Consider the following 691-residue polypeptide: Pentatricopeptide repeat-containing protein ATP4, chloroplastic (691 aa).

Positions methionine 1 to tryptophan 17 are enriched in low complexity. The transit peptide at methionine 1–valine 35 directs the protein to the chloroplast. The segment at methionine 1 to asparagine 76 is disordered. A compositionally biased stretch (polar residues) spans alanine 24–serine 33. Positions proline 45–aspartate 56 are enriched in pro residues. Residues glycine 61–asparagine 76 show a composition bias toward polar residues. PPR repeat units lie at residues lysine 163 to proline 197, aspartate 198 to proline 232, aspartate 233 to leucine 267, aspartate 268 to proline 302, asparagine 303 to proline 337, serine 338 to isoleucine 372, aspartate 373 to serine 403, aspartate 411 to proline 445, asparagine 446 to proline 480, and lysine 546 to alanine 580. The region spanning leucine 592–lysine 677 is the Smr domain.

This sequence belongs to the PPR family. P subfamily.

Its subcellular location is the plastid. It is found in the chloroplast stroma. Functionally, involved in translation and accumulation of chloroplast ATP synthase subunits. Interacts with the 5'-UTR of the chloroplast bicistronic atpB and atpE mRNA and activates its translation by facilitating ribosome association with the mRNA. Required for accumulation and activity of the chloroplast ATP synthase. Enhances atpA translation and is required for accumulation of specific processed atpF and psaJ transcripts. Required for the stabilization of bicistronic rpl16 and rpl14 mRNAs. The polypeptide is Pentatricopeptide repeat-containing protein ATP4, chloroplastic (Zea mays (Maize)).